Reading from the N-terminus, the 72-residue chain is Protein kish (72 aa).

The N-terminal stretch at 1–26 (MVAIFNFQSLLVVILLFICTCTYIRG) is a signal peptide. Residues 27–47 (SYPSLLEVRDKHSFSGLPRKA) lie on the Extracellular side of the membrane. A helical transmembrane segment spans residues 48–68 (AIIGERLSPWVSACCLIMGLW). Topologically, residues 69–72 (TLYN) are cytoplasmic.

Belongs to the KISH family.

Its subcellular location is the golgi apparatus membrane. Involved in the early part of the secretory pathway. This chain is Protein kish (tmem167), found in Dictyostelium discoideum (Social amoeba).